Consider the following 295-residue polypeptide: Bifunctional protein FolD (295 aa).

Residues 166-168 (GRS), S191, and I232 contribute to the NADP(+) site.

This sequence belongs to the tetrahydrofolate dehydrogenase/cyclohydrolase family. In terms of assembly, homodimer.

It catalyses the reaction (6R)-5,10-methylene-5,6,7,8-tetrahydrofolate + NADP(+) = (6R)-5,10-methenyltetrahydrofolate + NADPH. It carries out the reaction (6R)-5,10-methenyltetrahydrofolate + H2O = (6R)-10-formyltetrahydrofolate + H(+). It functions in the pathway one-carbon metabolism; tetrahydrofolate interconversion. Its function is as follows. Catalyzes the oxidation of 5,10-methylenetetrahydrofolate to 5,10-methenyltetrahydrofolate and then the hydrolysis of 5,10-methenyltetrahydrofolate to 10-formyltetrahydrofolate. The sequence is that of Bifunctional protein FolD from Rhodopseudomonas palustris (strain BisB5).